The primary structure comprises 506 residues: MAGRDAASNQLIDYKNSQTVSPGAITTGNGAPIGIKDASQTVGPRGPILLQDVNFLDEMSHFDRERIPERVVHAKGAGAFGYFEVTHDITQYCAAKIFDKVKKRTPLAVRFSTVGGESGSADTARDPRGFAVKFYTEDGVWDLVGNNTPVFFIRDPILFPSFIHTQKRNPQTHLKDPDMFWDFLTLRPESAHQVCILFSDRGTPDGYCHMNGYGSHTFKLINAKGEPIYAKFHFKTDQGIKNLDVKTADQLASTDPDYSIRDLYNRIKTCKFPSWTMYIQVMTYEQAKKFKYNPFDVTKVWSQKEYPLIPVGKMVLDRNPKNYFAEVEQIAFSPAHLVPGVEPSPDKMLHGRLFSYSDTHRHRLGPNYLQIPVNCPYKVKIENFQRDGAMNVTDNQDGAPNYFPNSFNGPQECPRARALSSCCPVTGDVYRYSSGDTEDNFGQVTDFWVHVLDKCAKKRLVQNIAGHLSNASQFLQERAVKNFTQVHADFGRMLTEELNLAKSSKF.

Residues His-73 and Asn-146 contribute to the active site. Tyr-356 lines the heme pocket. The short motif at 504-506 is the Microbody targeting signal element; that stretch reads SKF.

The protein belongs to the catalase family. In terms of assembly, homotetramer. Requires heme as cofactor.

It is found in the peroxisome matrix. It carries out the reaction 2 H2O2 = O2 + 2 H2O. Functionally, catalyzes the degradation of hydrogen peroxide (H(2)O(2)) generated by peroxisomal oxidases to water and oxygen, thereby protecting cells from the toxic effects of hydrogen peroxide. The chain is Catalase (Cat) from Drosophila melanogaster (Fruit fly).